The following is a 433-amino-acid chain: 26S proteasome regulatory subunit 7 (433 aa).

The tract at residues 1–23 (MPDYLGADQRKTKEEEKEDKPIR) is disordered. Basic and acidic residues predominate over residues 8–23 (DQRKTKEEEKEDKPIR). 216–223 (GPPGTGKT) contributes to the ATP binding site.

It belongs to the AAA ATPase family. In terms of processing, phosphorylated. Dephosphorylated by ublcp1 which impairs psmc2 ATPase activity and disrupts 26S proteasome assembly.

It localises to the cytoplasm. The protein resides in the nucleus. Its function is as follows. The 26S proteasome is involved in the ATP-dependent degradation of ubiquitinated proteins. The regulatory (or ATPase) complex confers ATP dependency and substrate specificity to the 26S complex. This chain is 26S proteasome regulatory subunit 7 (psmc2), found in Xenopus laevis (African clawed frog).